A 563-amino-acid polypeptide reads, in one-letter code: NAD-dependent malic enzyme (563 aa).

Tyr-101 serves as the catalytic Proton donor. NAD(+) is bound at residue Arg-154. Lys-172 (proton acceptor) is an active-site residue. A divalent metal cation-binding residues include Glu-243, Asp-244, and Asp-267. NAD(+) is bound by residues Asp-267 and Asn-416.

Belongs to the malic enzymes family. As to quaternary structure, homotetramer. Requires Mg(2+) as cofactor. Mn(2+) is required as a cofactor.

It carries out the reaction (S)-malate + NAD(+) = pyruvate + CO2 + NADH. It catalyses the reaction oxaloacetate + H(+) = pyruvate + CO2. This chain is NAD-dependent malic enzyme, found in Pseudomonas syringae pv. tomato (strain ATCC BAA-871 / DC3000).